The following is a 245-amino-acid chain: Lactate utilization protein A (245 aa).

The protein belongs to the LutA/YkgE family.

Functionally, is involved in L-lactate degradation and allows cells to grow with lactate as the sole carbon source. The protein is Lactate utilization protein A of Macrococcus caseolyticus (strain JCSC5402) (Macrococcoides caseolyticum).